The sequence spans 328 residues: Probable tRNA pseudouridine synthase B (328 aa).

Aspartate 71 (nucleophile) is an active-site residue. Residues 238–313 (LPKIWVRDSA…LVARVDRVIM (76 aa)) enclose the PUA domain.

Belongs to the pseudouridine synthase TruB family. Type 2 subfamily.

It carries out the reaction uridine(55) in tRNA = pseudouridine(55) in tRNA. In terms of biological role, could be responsible for synthesis of pseudouridine from uracil-55 in the psi GC loop of transfer RNAs. The polypeptide is Probable tRNA pseudouridine synthase B (Pyrobaculum islandicum (strain DSM 4184 / JCM 9189 / GEO3)).